Reading from the N-terminus, the 590-residue chain is Aspartate--tRNA ligase (590 aa).

E175 lines the L-aspartate pocket. Positions 199–202 (QIFK) are aspartate. R221 is a binding site for L-aspartate. ATP contacts are provided by residues 221 to 223 (RDE) and Q230. H449 is an L-aspartate binding site. E483 contacts ATP. Residue R490 coordinates L-aspartate. ATP is bound at residue 535–538 (GLDR).

It belongs to the class-II aminoacyl-tRNA synthetase family. Type 1 subfamily. In terms of assembly, homodimer.

It is found in the cytoplasm. It catalyses the reaction tRNA(Asp) + L-aspartate + ATP = L-aspartyl-tRNA(Asp) + AMP + diphosphate. Functionally, catalyzes the attachment of L-aspartate to tRNA(Asp) in a two-step reaction: L-aspartate is first activated by ATP to form Asp-AMP and then transferred to the acceptor end of tRNA(Asp). This is Aspartate--tRNA ligase from Geobacillus kaustophilus (strain HTA426).